The chain runs to 524 residues: Nucleoporin NUP56 (524 aa).

The disordered stretch occupies residues 1–219 (MADDPHNTST…SSMAKFASST (219 aa)). Composition is skewed to basic and acidic residues over residues 28 to 80 (VKED…EPEK), 114 to 168 (THDE…KEVE), and 179 to 199 (SAEKPKIEEKKDESKDTKVDK). A Nuclear localization signal motif is present at residues 37 to 44 (ARRELKQT). Positions 111–133 (KKRTHDELEQDGKEEEEKKEGEK) form a coiled coil. The span at 200–219 (PQTSSSAFANSSMAKFASST) shows a compositional bias: polar residues. FG repeat units lie at residues 223 to 224 (FG), 226 to 227 (FG), 237 to 238 (FG), 247 to 248 (FG), 266 to 267 (FG), 312 to 313 (FG), and 328 to 329 (FG). Disordered stretches follow at residues 247–284 (FGSKSADASAAPAGPPKLSFGSASAASPFASLNGQAGG) and 300–371 (GSSA…GEEK). Residues 248-277 (GSKSADASAAPAGPPKLSFGSASAASPFAS) are compositionally biased toward low complexity. Acidic residues-rich tracts occupy residues 332–345 (ESDEEDEGEGEEGE) and 352–362 (GEGEEKEEEEK). The stretch at 345-376 (EENKSENGEGEEKEEEEKEEKASGEEKKKFKL) forms a coiled coil. The region spanning 377-475 (QKVHIDDGEG…TPILPAMKFQ (99 aa)) is the RanBD1 domain. The stretch at 503–524 (SQANATQFSNMVEKIKEKLAAA) forms a coiled coil.

As to quaternary structure, the nuclear pore complex (NPC) constitutes the exclusive means of nucleocytoplasmic transport. NPCs allow the passive diffusion of ions and small molecules and the active, nuclear transport receptor-mediated bidirectional transport of macromolecules such as proteins, RNAs, ribonucleoparticles (RNPs), and ribosomal subunits across the nuclear envelope. The 55-60 MDa NPC is composed of at least 28 different subunits: AMO1, ELYS, GLE1, GLE2, MLP1, NDC1, NIC96, NSP1, NUP133, NUP145, NUP152, NUP159, NUP170, NUP188, NUP192, NUP37, NUP49, NUP53, NUP56, NUP57, NUP82, NUP84, NUP85, POM152, POM33, POM34, SEC13 and SEH1. Due to its 8-fold rotational symmetry, all subunits are present with 8 copies or multiples thereof.

The protein resides in the nucleus. Its subcellular location is the nuclear pore complex. It localises to the nucleus membrane. Functions as a component of the nuclear pore complex (NPC). NPC components, collectively referred to as nucleoporins (NUPs), can play the role of both NPC structural components and of docking or interaction partners for transiently associated nuclear transport factors. Active directional transport is assured by both, a Phe-Gly (FG) repeat affinity gradient for these transport factors across the NPC and a transport cofactor concentration gradient across the nuclear envelope (GSP1 and GSP2 GTPases associated predominantly with GTP in the nucleus, with GDP in the cytoplasm). This is Nucleoporin NUP56 (NUP56) from Chaetomium thermophilum (strain DSM 1495 / CBS 144.50 / IMI 039719) (Thermochaetoides thermophila).